The sequence spans 169 residues: Sorting nexin-24 (169 aa).

Met1 carries the post-translational modification N-acetylmethionine. The PX domain maps to 1 to 125 (MEVYIPSFRY…SFDETESEES (125 aa)). The a 1,2-diacyl-sn-glycero-3-phospho-(1D-myo-inositol-3-phosphate) site is built by Arg38, Ser40, Lys61, and Arg74. Phosphoserine occurs at positions 113 and 116.

The protein belongs to the sorting nexin family.

The protein resides in the cytoplasmic vesicle membrane. May be involved in several stages of intracellular trafficking. This Homo sapiens (Human) protein is Sorting nexin-24 (SNX24).